We begin with the raw amino-acid sequence, 144 residues long: Large ribosomal subunit protein uL16 (144 aa).

The protein belongs to the universal ribosomal protein uL16 family. As to quaternary structure, part of the 50S ribosomal subunit.

Its function is as follows. Binds 23S rRNA and is also seen to make contacts with the A and possibly P site tRNAs. This chain is Large ribosomal subunit protein uL16, found in Bacillus cereus (strain ATCC 10987 / NRS 248).